We begin with the raw amino-acid sequence, 403 residues long: GTPase Obg (403 aa).

Residues 1–159 (MKFIDESLIR…RDLLLELMLL (159 aa)) enclose the Obg domain. One can recognise an OBG-type G domain in the interval 160 to 333 (ADVGMLGFPN…LCRDIMDFII (174 aa)). Residues 166–173 (GFPNAGKS), 191–195 (FTTLV), 213–216 (DIPG), 283–286 (NKID), and 314–316 (SAA) each bind GTP. Ser173 and Thr193 together coordinate Mg(2+). Residues 364 to 403 (YQFDDDEDWDDDWTEEDDDEDWDDDWSEEDDEGIEFIYKP) form a disordered region. Positions 365–397 (QFDDDEDWDDDWTEEDDDEDWDDDWSEEDDEGI) are enriched in acidic residues.

Belongs to the TRAFAC class OBG-HflX-like GTPase superfamily. OBG GTPase family. In terms of assembly, monomer. Mg(2+) is required as a cofactor.

The protein localises to the cytoplasm. Its function is as follows. An essential GTPase which binds GTP, GDP and possibly (p)ppGpp with moderate affinity, with high nucleotide exchange rates and a fairly low GTP hydrolysis rate. Plays a role in control of the cell cycle, stress response, ribosome biogenesis and in those bacteria that undergo differentiation, in morphogenesis control. The chain is GTPase Obg from Haemophilus influenzae (strain PittGG).